The primary structure comprises 365 residues: tRNA 2-selenouridine synthase (365 aa).

In terms of domain architecture, Rhodanese spans 15 to 138 (LVNDHPIMDA…MRQFLIETID (124 aa)). Cysteine 98 (S-selanylcysteine intermediate) is an active-site residue.

It belongs to the SelU family. As to quaternary structure, monomer.

The enzyme catalyses 5-methylaminomethyl-2-thiouridine(34) in tRNA + selenophosphate + (2E)-geranyl diphosphate + H2O + H(+) = 5-methylaminomethyl-2-selenouridine(34) in tRNA + (2E)-thiogeraniol + phosphate + diphosphate. It carries out the reaction 5-methylaminomethyl-2-thiouridine(34) in tRNA + (2E)-geranyl diphosphate = 5-methylaminomethyl-S-(2E)-geranyl-thiouridine(34) in tRNA + diphosphate. It catalyses the reaction 5-methylaminomethyl-S-(2E)-geranyl-thiouridine(34) in tRNA + selenophosphate + H(+) = 5-methylaminomethyl-2-(Se-phospho)selenouridine(34) in tRNA + (2E)-thiogeraniol. The catalysed reaction is 5-methylaminomethyl-2-(Se-phospho)selenouridine(34) in tRNA + H2O = 5-methylaminomethyl-2-selenouridine(34) in tRNA + phosphate. Involved in the post-transcriptional modification of the uridine at the wobble position (U34) of tRNA(Lys), tRNA(Glu) and tRNA(Gln). Catalyzes the conversion of 2-thiouridine (S2U-RNA) to 2-selenouridine (Se2U-RNA). Acts in a two-step process involving geranylation of 2-thiouridine (S2U) to S-geranyl-2-thiouridine (geS2U) and subsequent selenation of the latter derivative to 2-selenouridine (Se2U) in the tRNA chain. This chain is tRNA 2-selenouridine synthase, found in Shewanella pealeana (strain ATCC 700345 / ANG-SQ1).